Here is a 250-residue protein sequence, read N- to C-terminus: DNA polymerase sliding clamp (250 aa).

Belongs to the PCNA family. As to quaternary structure, homotrimer. The subunits circularize to form a toroid; DNA passes through its center. Replication factor C (RFC) is required to load the toroid on the DNA.

Functionally, sliding clamp subunit that acts as a moving platform for DNA processing. Responsible for tethering the catalytic subunit of DNA polymerase and other proteins to DNA during high-speed replication. The chain is DNA polymerase sliding clamp from Methanococcus maripaludis (strain C5 / ATCC BAA-1333).